The following is a 323-amino-acid chain: MLSVNKKALEIVNKMIENKEEINIDVIKLENGATVLDCGVNVPGSWKAGKLFTKICLGGLAHVGISLSPCECKGITLPYVKIKTSHPAIATLGAQKAGWAVKVGKYFAMGSGPARALAKKPKKTYEEIGYEDDADVAVLCLEASKLPNEEVAEYVAKECGVEVENVYLLVAPTASLVGSIQISGRVVENGTYKMLEVLEFDVNKVKYAAGLAPIAPIIGDDFAMMGATNDMVLYGGITYYYIKSDENDDIESLCKALPSCASKDYGKPFMEVFKAADYDFYKIDKGMFAPAVVVINDMTTGKVYRAGKVNAEVLKKSLGWTEL.

Belongs to the MCH family.

The protein resides in the cytoplasm. The catalysed reaction is 5,10-methenyl-5,6,7,8-tetrahydromethanopterin + H2O = N(5)-formyl-5,6,7,8-tetrahydromethanopterin + H(+). It functions in the pathway one-carbon metabolism; methanogenesis from CO(2); 5,10-methenyl-5,6,7,8-tetrahydromethanopterin from CO(2): step 3/3. Its function is as follows. Catalyzes the reversible interconversion of 5-formyl-H(4)MPT to methenyl-H(4)MPT(+). This Methanocaldococcus jannaschii (strain ATCC 43067 / DSM 2661 / JAL-1 / JCM 10045 / NBRC 100440) (Methanococcus jannaschii) protein is Methenyltetrahydromethanopterin cyclohydrolase (mch).